Here is a 242-residue protein sequence, read N- to C-terminus: Tryptophan synthase alpha chain (242 aa).

Active-site proton acceptor residues include glutamate 32 and aspartate 43.

The protein belongs to the TrpA family. Tetramer of two alpha and two beta chains.

The protein resides in the plastid. Its subcellular location is the chloroplast. The enzyme catalyses (1S,2R)-1-C-(indol-3-yl)glycerol 3-phosphate + L-serine = D-glyceraldehyde 3-phosphate + L-tryptophan + H2O. Its pathway is amino-acid biosynthesis; L-tryptophan biosynthesis; L-tryptophan from chorismate: step 5/5. The alpha subunit is responsible for the aldol cleavage of indoleglycerol phosphate to indole and glyceraldehyde 3-phosphate. The chain is Tryptophan synthase alpha chain from Cyanidium caldarium (Red alga).